Here is a 580-residue protein sequence, read N- to C-terminus: Cyclin-K (580 aa).

Residues 262–580 (KQQMPHHTPH…GGLGRAAWMR (319 aa)) are disordered. Composition is skewed to low complexity over residues 263 to 277 (QQMPHHTPHQLQQPP) and 285 to 321 (VPQVQQSQPSQSSEPSQPQQKDPQQPAQQQQPAQQPK). 4 positions are modified to phosphoserine: serine 324, serine 328, serine 329, and serine 340. A compositionally biased stretch (low complexity) spans 377 to 386 (PLAAALGEAE). Residues 400 to 426 (QIPPPAHPAPVHQPPPLPHRPPPPPPS) show a composition bias toward pro residues. Residues 427–444 (SYMTGMSTTSSYMSGEGY) show a composition bias toward low complexity. Positions 477–568 (VYPPNPPPPP…PPPIPPPGMP (92 aa)) are enriched in pro residues.

Belongs to the cyclin family. Cyclin C subfamily. Regulatory subunit of cyclin-dependent kinases. Identified in a complex with a kinase and the RNA polymerase II holoenzyme. Interacts with POLR2A. Interacts with CDK12 and CDK13. Interacts with CDK9 according to PubMed:10574912; does not interact with CDK9 according to PubMed:22012619. In terms of assembly, (Microbial infection) Interacts with human herpes virus 1 (HHV-1) transcriptional regulator ICP22. Widely expressed. Highest levels in testis.

The protein localises to the nucleus. Its function is as follows. Regulatory subunit of cyclin-dependent kinases that mediates activation of target kinases. Plays a role in transcriptional regulation via its role in regulating the phosphorylation of the C-terminal domain (CTD) of the large subunit of RNA polymerase II (POLR2A). In Homo sapiens (Human), this protein is Cyclin-K (CCNK).